Reading from the N-terminus, the 116-residue chain is UPF0102 protein LBJ_1427 (116 aa).

It belongs to the UPF0102 family.

The polypeptide is UPF0102 protein LBJ_1427 (Leptospira borgpetersenii serovar Hardjo-bovis (strain JB197)).